The primary structure comprises 348 residues: UDP-glucose 4-epimerase (348 aa).

Residues Gly12 to Ile14, Asp33 to Asn37, Asp66 to Ile67, Phe88, and Lys92 contribute to the NAD(+) site. A substrate-binding site is contributed by Ser132–Thr134. Tyr157 acts as the Proton acceptor in catalysis. The NAD(+) site is built by Lys161 and Tyr185. Residues Tyr185–Asn187, Asn206–Leu208, Asn224–Phe226, Arg239, and Arg300–Asp303 contribute to the substrate site.

Belongs to the NAD(P)-dependent epimerase/dehydratase family. Homodimer. Requires NAD(+) as cofactor.

It catalyses the reaction UDP-alpha-D-glucose = UDP-alpha-D-galactose. The catalysed reaction is UDP-N-acetyl-alpha-D-glucosamine = UDP-N-acetyl-alpha-D-galactosamine. It functions in the pathway carbohydrate metabolism; galactose metabolism. Catalyzes two distinct but analogous reactions: the reversible epimerization of UDP-glucose to UDP-galactose and the reversible epimerization of UDP-N-acetylglucosamine to UDP-N-acetylgalactosamine. The reaction with UDP-Gal plays a critical role in the Leloir pathway of galactose catabolism in which galactose is converted to the glycolytic intermediate glucose 6-phosphate. It contributes to the catabolism of dietary galactose and enables the endogenous biosynthesis of both UDP-Gal and UDP-GalNAc when exogenous sources are limited. Both UDP-sugar interconversions are important in the synthesis of glycoproteins and glycolipids. The sequence is that of UDP-glucose 4-epimerase (GALE) from Pongo abelii (Sumatran orangutan).